Here is a 37-residue protein sequence, read N- to C-terminus: MKVKPSVKPICEKCKVIKRKGKVMVICENPKHKQKQG.

Belongs to the bacterial ribosomal protein bL36 family.

In Moorella thermoacetica (strain ATCC 39073 / JCM 9320), this protein is Large ribosomal subunit protein bL36.